The primary structure comprises 289 residues: Ribosomal protein L11 methyltransferase (289 aa).

S-adenosyl-L-methionine is bound by residues Thr142, Gly163, Asp185, and Asn226.

This sequence belongs to the methyltransferase superfamily. PrmA family.

It is found in the cytoplasm. It carries out the reaction L-lysyl-[protein] + 3 S-adenosyl-L-methionine = N(6),N(6),N(6)-trimethyl-L-lysyl-[protein] + 3 S-adenosyl-L-homocysteine + 3 H(+). Methylates ribosomal protein L11. The polypeptide is Ribosomal protein L11 methyltransferase (Legionella pneumophila (strain Lens)).